Here is a 488-residue protein sequence, read N- to C-terminus: Proline--tRNA ligase (488 aa).

It belongs to the class-II aminoacyl-tRNA synthetase family. ProS type 3 subfamily. Homodimer.

The protein localises to the cytoplasm. It carries out the reaction tRNA(Pro) + L-proline + ATP = L-prolyl-tRNA(Pro) + AMP + diphosphate. Functionally, catalyzes the attachment of proline to tRNA(Pro) in a two-step reaction: proline is first activated by ATP to form Pro-AMP and then transferred to the acceptor end of tRNA(Pro). The sequence is that of Proline--tRNA ligase from Borrelia garinii subsp. bavariensis (strain ATCC BAA-2496 / DSM 23469 / PBi) (Borreliella bavariensis).